A 110-amino-acid polypeptide reads, in one-letter code: Nucleoid-associated protein Sfum_2790 (110 aa).

Belongs to the YbaB/EbfC family. Homodimer.

The protein resides in the cytoplasm. It is found in the nucleoid. Functionally, binds to DNA and alters its conformation. May be involved in regulation of gene expression, nucleoid organization and DNA protection. This chain is Nucleoid-associated protein Sfum_2790, found in Syntrophobacter fumaroxidans (strain DSM 10017 / MPOB).